Reading from the N-terminus, the 365-residue chain is Spermidine/putrescine import ATP-binding protein PotA (365 aa).

Positions 7 to 237 (LTLADITKRF…PNNLFVASFI (231 aa)) constitute an ABC transporter domain. An ATP-binding site is contributed by 39–46 (GPSGCGKT).

Belongs to the ABC transporter superfamily. Spermidine/putrescine importer (TC 3.A.1.11.1) family. The complex is composed of two ATP-binding proteins (PotA), two transmembrane proteins (PotB and PotC) and a solute-binding protein (PotD).

It localises to the cell inner membrane. The enzyme catalyses ATP + H2O + polyamine-[polyamine-binding protein]Side 1 = ADP + phosphate + polyamineSide 2 + [polyamine-binding protein]Side 1.. Part of the ABC transporter complex PotABCD involved in spermidine/putrescine import. Responsible for energy coupling to the transport system. In Hahella chejuensis (strain KCTC 2396), this protein is Spermidine/putrescine import ATP-binding protein PotA.